The sequence spans 373 residues: P2Y purinoceptor 2 (373 aa).

Residues 1 to 32 (MAADLEPWNSTINGTWEGDELGYKCRFNEDFK) lie on the Extracellular side of the membrane. Residues Asn9 and Asn13 are each glycosylated (N-linked (GlcNAc...) asparagine). The helical transmembrane segment at 33–59 (YVLLPVSYGVVCVLGLCLNVVALYIFL) threads the bilayer. Topologically, residues 60 to 70 (CRLKTWNASTT) are cytoplasmic. The chain crosses the membrane as a helical span at residues 71–93 (YMFHLAVSDSLYAASLPLLVYYY). The Extracellular portion of the chain corresponds to 94–110 (ARGDHWPFSTVLCKLVR). Cysteines 106 and 183 form a disulfide. A helical membrane pass occupies residues 111–129 (FLFYTNLYCSILFLTCISV). The Cytoplasmic segment spans residues 130–152 (HRCLGVLRPLHSLRWGRARYARR). The chain crosses the membrane as a helical span at residues 153 to 172 (VAAVVWVLVLACQAPVLYFV). The Extracellular segment spans residues 173-194 (TTSVRGTRITCHDTSARELFSH). The helical transmembrane segment at 195–220 (FVAYSSVMLGLLFAVPFSVILVCYVL) threads the bilayer. Residues 221–246 (MARRLLKPAYGTTGGLPRAKRKSVRT) are Cytoplasmic-facing. A helical membrane pass occupies residues 247–269 (IALVLAVFALCFLPFHVTRTLYY). Residues 270–287 (SFRSLDLSCHTLNAINMA) lie on the Extracellular side of the membrane. A helical membrane pass occupies residues 288-309 (YKITRPLASANSCLDPVLYFLA). The Cytoplasmic segment spans residues 310-373 (GQRLVRFARD…AGSETKDIRL (64 aa)). The tract at residues 318 to 373 (RDAKPPTEPTPSPQARRKLGLHRPNRTVRKDLSVSSDDSRRTESTPAGSETKDIRL) is disordered. Residues 332 to 344 (ARRKLGLHRPNRT) are compositionally biased toward basic residues. Residues 345 to 360 (VRKDLSVSSDDSRRTE) are compositionally biased toward basic and acidic residues.

It belongs to the G-protein coupled receptor 1 family. Spleen, testis, kidney, liver, lung, heart and brain.

The protein resides in the cell membrane. Its function is as follows. Receptor for ATP and UTP coupled to G-proteins that activate a phosphatidylinositol-calcium second messenger system. The affinity range is UTP = ATP &gt; ATP-gamma-S &gt;&gt; 2-methylthio-ATP = ADP. This chain is P2Y purinoceptor 2 (P2ry2), found in Mus musculus (Mouse).